We begin with the raw amino-acid sequence, 351 residues long: Trans-enoyl reductase grgB (351 aa).

The region spanning 10-346 is the Enoyl reductase (ER) domain; sequence GAESGGYRLA…GKVHAKKLVV (337 aa). Residues 161–164, 184–187, tyrosine 202, 249–250, and 339–340 contribute to the NADP(+) site; these read ATAT, SPAN, LE, and VH.

The protein belongs to the zinc-containing alcohol dehydrogenase family.

It participates in secondary metabolite biosynthesis. Its function is as follows. Trans-enoyl reductase; part of the gene cluster that mediates the biosynthesis of gregatin A, a fungal polyketide featuring an alkylated furanone core. The PKS grgA synthesizes C11 and C4 polyketide chains in the presence and absence of the trans-enoyl reductase grgB, respectively. The polyketide transferase grgF is then responsible for the fusion of the two carbon chains to produce the furanone skeleton of gregatin A. Next, the cytochrome P450 monooxygenase grgG accepts performs the oxidative cyclization to furnish the gregatin scaffold and leads to the formation of desmethylgregatin A. Finally, the O-methyltransferase grgD methylates the carboxyl group of desmethylgregatin A to provide gregatin A. The chain is Trans-enoyl reductase grgB from Penicillium sp.